The sequence spans 691 residues: DNA ligase (691 aa).

NAD(+) is bound by residues Asp-41–Asp-45, Ser-90–Leu-91, and Glu-130. Lys-132 serves as the catalytic N6-AMP-lysine intermediate. NAD(+)-binding residues include Arg-153, Glu-190, Lys-307, and Lys-331. Zn(2+)-binding residues include Cys-425, Cys-428, Cys-443, and Cys-449. One can recognise a BRCT domain in the interval Ala-610–Arg-691.

This sequence belongs to the NAD-dependent DNA ligase family. LigA subfamily. It depends on Mg(2+) as a cofactor. Mn(2+) serves as cofactor.

It carries out the reaction NAD(+) + (deoxyribonucleotide)n-3'-hydroxyl + 5'-phospho-(deoxyribonucleotide)m = (deoxyribonucleotide)n+m + AMP + beta-nicotinamide D-nucleotide.. In terms of biological role, DNA ligase that catalyzes the formation of phosphodiester linkages between 5'-phosphoryl and 3'-hydroxyl groups in double-stranded DNA using NAD as a coenzyme and as the energy source for the reaction. It is essential for DNA replication and repair of damaged DNA. The chain is DNA ligase from Burkholderia multivorans (strain ATCC 17616 / 249).